A 62-amino-acid polypeptide reads, in one-letter code: Bowman-Birk type proteinase inhibitor B7 (62 aa).

5 cysteine pairs are disulfide-bonded: Cys-5–Cys-59, Cys-6–Cys-23, Cys-13–Cys-21, Cys-30–Cys-37, and Cys-34–Cys-51.

It belongs to the Bowman-Birk serine protease inhibitor family. As to expression, expressed in bulb (at protein level).

Its function is as follows. Serine protease inhibitor. Inhibits trypsin (Ki = 65 nM) and weakly inhibits chymotrypsin (Ki = 295 nM). Does not inhibit bacterial subtilisin. The sequence is that of Bowman-Birk type proteinase inhibitor B7 from Hyacinthus orientalis (Common hyacinth).